The primary structure comprises 396 residues: Elongation factor Tu (396 aa).

The 197-residue stretch at Lys-10–Glu-206 folds into the tr-type G domain. The G1 stretch occupies residues Gly-19–Thr-26. Gly-19 to Thr-26 provides a ligand contact to GTP. Thr-26 is a Mg(2+) binding site. The G2 stretch occupies residues Gly-60–Asn-64. The interval Asp-81–Gly-84 is G3. Residues Asp-81–His-85 and Asn-136–Asp-139 each bind GTP. The G4 stretch occupies residues Asn-136–Asp-139. Residues Ser-174–Lys-176 form a G5 region.

It belongs to the TRAFAC class translation factor GTPase superfamily. Classic translation factor GTPase family. EF-Tu/EF-1A subfamily. As to quaternary structure, monomer.

The protein resides in the cytoplasm. The enzyme catalyses GTP + H2O = GDP + phosphate + H(+). In terms of biological role, GTP hydrolase that promotes the GTP-dependent binding of aminoacyl-tRNA to the A-site of ribosomes during protein biosynthesis. The protein is Elongation factor Tu of Thiomonas delicata (Thiomonas cuprina).